A 363-amino-acid polypeptide reads, in one-letter code: Pyrimidine monooxygenase RutA (363 aa).

Residues 49–50 (IK), Asn115, Glu124, 140–141 (RY), and Ser190 each bind FMN.

It belongs to the NtaA/SnaA/DszA monooxygenase family. RutA subfamily.

The catalysed reaction is uracil + FMNH2 + NADH + O2 = (Z)-3-ureidoacrylate + FMN + NAD(+) + H2O + H(+). The enzyme catalyses thymine + FMNH2 + NADH + O2 = (Z)-2-methylureidoacrylate + FMN + NAD(+) + H2O + H(+). Its function is as follows. Catalyzes the pyrimidine ring opening between N-3 and C-4 by an unusual flavin hydroperoxide-catalyzed mechanism, adding oxygen atoms in the process to yield ureidoacrylate peracid, that immediately reacts with FMN forming ureidoacrylate and FMN-N(5)-oxide. The FMN-N(5)-oxide reacts spontaneously with NADH to produce FMN. Requires the flavin reductase RutF to regenerate FMN in vivo. This is Pyrimidine monooxygenase RutA from Enterobacter cloacae subsp. cloacae (strain ATCC 13047 / DSM 30054 / NBRC 13535 / NCTC 10005 / WDCM 00083 / NCDC 279-56).